The primary structure comprises 550 residues: Metal transporter Nramp4 (550 aa).

The span at 1–13 (MEEGAKIGREHEQ) shows a compositional bias: basic and acidic residues. Residues 1 to 37 (MEEGAKIGREHEQQQQQHGRVNGSGRVAAVGGGSGGG) form a disordered region. Residues 14–29 (QQQQHGRVNGSGRVAA) are compositionally biased toward low complexity. Helical transmembrane passes span 72–92 (FLAH…PSNL), 105–125 (SLLW…SLAA), 151–171 (LWLL…LGTA), 177–197 (LLHI…FLIL), 207–227 (MEFT…MELG), 255–275 (VAMF…SLVL), 292–312 (FFLL…VAIV), 354–374 (VYGV…SYAG), 388–408 (IIYL…CSIG), 416–436 (IINI…IPLI), 457–477 (IAWI…CTSF), and 492–512 (AIIS…LIYL).

This sequence belongs to the NRAMP (TC 2.A.55) family.

The protein localises to the membrane. In terms of biological role, probable metal transporter. The protein is Metal transporter Nramp4 (NRAMP4) of Oryza sativa subsp. japonica (Rice).